The primary structure comprises 227 residues: Esterase OVCA2 (227 aa).

Catalysis depends on charge relay system residues Ser-120, Asp-180, and His-207.

It belongs to the LovG family.

The catalysed reaction is a carboxylic ester + H2O = an alcohol + a carboxylate + H(+). In terms of biological role, exhibits ester hydrolase activity with a strong preference for long-chain alkyl ester substrates and high selectivity against a variety of short, branched, and substituted esters. Is able to hydrolyze ester bonds within a wide range of p-nitrophenyl derivatives (C2-C14) in vitro, with a strong preference toward substrates of &gt;8 carbons. The sequence is that of Esterase OVCA2 (ovca2) from Danio rerio (Zebrafish).